We begin with the raw amino-acid sequence, 480 residues long: EGF-like repeat and discoidin I-like domain-containing protein 3 (480 aa).

The first 23 residues, 1–23 (MKRSVAVWLLVGLSLGVPQFGKG), serve as a signal peptide directing secretion. In terms of domain architecture, EGF-like 1 spans 24–60 (DICDPNPCENGGICLPGLADGSFSCECPDGFTDPNCS). 3 disulfide bridges follow: C26–C37, C31–C48, and C50–C59. Residue T73 is glycosylated (O-linked (GalNAc...) threonine). EGF-like domains lie at 74 to 117 (SAGP…IHCQ) and 119 to 155 (NINE…RNCQ). Intrachain disulfides connect C78-C89, C83-C105, and C107-C116. An O-linked (Fuc...) threonine glycan is attached at T88. The Cell attachment site motif lies at 96–98 (RGD). Residues N119, I120, and E122 each coordinate Ca(2+). 6 disulfide bridges follow: C123–C134, C128–C143, C145–C154, C158–C314, C301–C305, and C319–C476. Ca(2+) contacts are provided by D136 and L137. Residue N140 is glycosylated (N-linked (GlcNAc...) asparagine). F5/8 type C domains lie at 158 to 314 (CSGP…LLGC) and 319 to 476 (CSEP…LLGC).

It localises to the secreted. Functionally, promotes adhesion of endothelial cells through interaction with the alpha-v/beta-3 integrin receptor. Inhibits formation of vascular-like structures. May be involved in regulation of vascular morphogenesis of remodeling in embryonic development. This chain is EGF-like repeat and discoidin I-like domain-containing protein 3 (EDIL3), found in Homo sapiens (Human).